Consider the following 992-residue polypeptide: RNA-binding protein 12 (992 aa).

The RRM 1 domain maps to 304 to 379; the sequence is LYVSVHGMPF…RYVEVSPATE (76 aa). 2 positions are modified to phosphoserine: S352 and S375. A disordered region spans residues 393–424; the sequence is QSMGPSGQAHPPPQTLPRSKSPSGQKRSRSRS. A compositionally biased stretch (polar residues) spans 408–417; the sequence is LPRSKSPSGQ. Phosphoserine is present on residues S420, S422, and S424. The RRM 2 domain occupies 430 to 507; sequence FCVYLKGLPF…RFIQVHPITK (78 aa). S525 carries the post-translational modification Phosphoserine. Positions 849–913 are disordered; that stretch reads FGGIPQNFGN…PGFGASSGKP (65 aa). Positions 876-887 are enriched in low complexity; the sequence is LGSVPGHLSGPP. Residues 916-992 form the RRM 3 domain; it reads TIIKVQNMPF…GSRKVKLVLG (77 aa).

It is found in the nucleus. The polypeptide is RNA-binding protein 12 (Rbm12) (Mus musculus (Mouse)).